We begin with the raw amino-acid sequence, 125 residues long: SKP1-like protein 7 (125 aa).

The segment at 94–125 (MNAAYDLHIKSLLALAYQTVADMVNDNKWAFE) is interaction with the F-box domain of F-box proteins.

The protein belongs to the SKP1 family. As to quaternary structure, part of a SCF (SKP1-cullin-F-box) protein ligase complex. In terms of tissue distribution, restricted to siliques.

It is found in the nucleus. It functions in the pathway protein modification; protein ubiquitination. Functionally, involved in ubiquitination and subsequent proteasomal degradation of target proteins. Together with CUL1, RBX1 and a F-box protein, it forms a SCF E3 ubiquitin ligase complex. The functional specificity of this complex depends on the type of F-box protein. In the SCF complex, it serves as an adapter that links the F-box protein to CUL1. The protein is SKP1-like protein 7 (ASK7) of Arabidopsis thaliana (Mouse-ear cress).